The chain runs to 375 residues: Erythronate-4-phosphate dehydrogenase (375 aa).

Residues Ser-45 and Thr-66 each contribute to the substrate site. NAD(+)-binding positions include Asp-146, Thr-175, 206–208, and Asp-232; that span reads ASR. Arg-208 is an active-site residue. Glu-237 is a catalytic residue. The Proton donor role is filled by His-254. Residue Gly-257 participates in NAD(+) binding. Tyr-258 is a binding site for substrate.

It belongs to the D-isomer specific 2-hydroxyacid dehydrogenase family. PdxB subfamily. In terms of assembly, homodimer.

It is found in the cytoplasm. The catalysed reaction is 4-phospho-D-erythronate + NAD(+) = (R)-3-hydroxy-2-oxo-4-phosphooxybutanoate + NADH + H(+). It participates in cofactor biosynthesis; pyridoxine 5'-phosphate biosynthesis; pyridoxine 5'-phosphate from D-erythrose 4-phosphate: step 2/5. Catalyzes the oxidation of erythronate-4-phosphate to 3-hydroxy-2-oxo-4-phosphonooxybutanoate. The chain is Erythronate-4-phosphate dehydrogenase from Photorhabdus laumondii subsp. laumondii (strain DSM 15139 / CIP 105565 / TT01) (Photorhabdus luminescens subsp. laumondii).